We begin with the raw amino-acid sequence, 431 residues long: Glucose-1-phosphate adenylyltransferase (431 aa).

K39 lines the beta-D-fructose 1,6-bisphosphate pocket. Residues R40, H46, and R52 each contribute to the AMP site. Position 114 (Y114) interacts with alpha-D-glucose 1-phosphate. Position 130 (R130) interacts with AMP. Alpha-D-glucose 1-phosphate is bound by residues G179, 194–195 (EK), and S212. E370 and R386 together coordinate AMP. Beta-D-fructose 1,6-bisphosphate contacts are provided by residues 419 to 423 (REMLR) and 429 to 431 (QER).

This sequence belongs to the bacterial/plant glucose-1-phosphate adenylyltransferase family. As to quaternary structure, homotetramer.

The enzyme catalyses alpha-D-glucose 1-phosphate + ATP + H(+) = ADP-alpha-D-glucose + diphosphate. It participates in glycan biosynthesis; glycogen biosynthesis. Allosterically activated by fructose-1,6-bisphosphate (F16BP) and inhibited by AMP. Functionally, involved in the biosynthesis of ADP-glucose, a building block required for the elongation reactions to produce glycogen. Catalyzes the reaction between ATP and alpha-D-glucose 1-phosphate (G1P) to produce pyrophosphate and ADP-Glc. The chain is Glucose-1-phosphate adenylyltransferase from Shigella boydii serotype 18 (strain CDC 3083-94 / BS512).